The sequence spans 152 residues: Alpha-amylase inhibitor BDAI-1 (152 aa).

The signal sequence occupies residues 1–30 (MGAMWMKSMLLVLLLCMLMVTPMTGARSDN).

It belongs to the protease inhibitor I6 (cereal trypsin/alpha-amylase inhibitor) family. In terms of assembly, homodimer. Five disulfide bonds, which are essential for the inhibitor activity, are probably present. In terms of tissue distribution, endosperm.

The protein localises to the secreted. Could be involved in insect defense mechanisms. Inhibits insect-type alpha-amylase. The polypeptide is Alpha-amylase inhibitor BDAI-1 (IAD1) (Hordeum vulgare (Barley)).